The sequence spans 209 residues: FMN-dependent NADH:quinone oxidoreductase (209 aa).

FMN is bound by residues serine 9 and 15 to 17 (SNS).

This sequence belongs to the azoreductase type 1 family. In terms of assembly, homodimer. FMN is required as a cofactor.

It carries out the reaction 2 a quinone + NADH + H(+) = 2 a 1,4-benzosemiquinone + NAD(+). The catalysed reaction is N,N-dimethyl-1,4-phenylenediamine + anthranilate + 2 NAD(+) = 2-(4-dimethylaminophenyl)diazenylbenzoate + 2 NADH + 2 H(+). Quinone reductase that provides resistance to thiol-specific stress caused by electrophilic quinones. Functionally, also exhibits azoreductase activity. Catalyzes the reductive cleavage of the azo bond in aromatic azo compounds to the corresponding amines. In Bordetella parapertussis (strain 12822 / ATCC BAA-587 / NCTC 13253), this protein is FMN-dependent NADH:quinone oxidoreductase.